Consider the following 235-residue polypeptide: MRRLMIDQLFKLTGHRFKDEEKLKRALTHASVQDSEQGNYERLEFLGDRVLGLLIAEMLYQLFPQASEGELSVRLNHLVNAQTCADIAREMRLPDMIQVGFEMRNFEGRRLINMHADVVEALIAVMYLDGGLESVRPFIQKYWQSRAKKMDAGRRDAKTELQEWAHIQGDAQPHYQVIKRSGPDHDPVFMVEVSISGFASEIGQGSSKRNAERMAAEKILRREGVWKTVEKNDYE.

Residues 6–131 (IDQLFKLTGH…LIAVMYLDGG (126 aa)) enclose the RNase III domain. Glutamate 44 lines the Mg(2+) pocket. The active site involves aspartate 48. Residues aspartate 117 and glutamate 120 each contribute to the Mg(2+) site. Glutamate 120 is a catalytic residue. In terms of domain architecture, DRBM spans 156–225 (DAKTELQEWA…AEKILRREGV (70 aa)).

This sequence belongs to the ribonuclease III family. In terms of assembly, homodimer. Requires Mg(2+) as cofactor.

Its subcellular location is the cytoplasm. The enzyme catalyses Endonucleolytic cleavage to 5'-phosphomonoester.. Functionally, digests double-stranded RNA. Involved in the processing of primary rRNA transcript to yield the immediate precursors to the large and small rRNAs (23S and 16S). Processes some mRNAs, and tRNAs when they are encoded in the rRNA operon. Processes pre-crRNA and tracrRNA of type II CRISPR loci if present in the organism. In Bartonella tribocorum (strain CIP 105476 / IBS 506), this protein is Ribonuclease 3.